The following is a 492-amino-acid chain: Adenylyltransferase and sulfurtransferase uba4 (492 aa).

ATP is bound by residues Gly99, Asp120, 127-131 (SNLHR), Lys144, and 188-189 (DN). Residues Cys237 and Cys240 each contribute to the Zn(2+) site. The active-site Glycyl thioester intermediate; for adenylyltransferase activity is the Cys254. Positions 317 and 320 each coordinate Zn(2+). The Rhodanese domain maps to 378–490 (GSKEPTIIDV…WREQIDPDWP (113 aa)). The Cysteine persulfide intermediate; for sulfurtransferase activity role is filled by Cys445.

This sequence in the N-terminal section; belongs to the HesA/MoeB/ThiF family. UBA4 subfamily. Requires Zn(2+) as cofactor.

The protein resides in the cytoplasm. The protein localises to the cytosol. It catalyses the reaction [molybdopterin-synthase sulfur-carrier protein]-C-terminal Gly-Gly + ATP + H(+) = [molybdopterin-synthase sulfur-carrier protein]-C-terminal Gly-Gly-AMP + diphosphate. It carries out the reaction [molybdopterin-synthase sulfur-carrier protein]-C-terminal Gly-Gly-AMP + S-sulfanyl-L-cysteinyl-[cysteine desulfurase] + AH2 = [molybdopterin-synthase sulfur-carrier protein]-C-terminal-Gly-aminoethanethioate + L-cysteinyl-[cysteine desulfurase] + A + AMP + 2 H(+). The protein operates within tRNA modification; 5-methoxycarbonylmethyl-2-thiouridine-tRNA biosynthesis. It functions in the pathway cofactor biosynthesis; molybdopterin biosynthesis. Functionally, plays a central role in 2-thiolation of mcm(5)S(2)U at tRNA wobble positions of cytosolic tRNA(Lys), tRNA(Glu) and tRNA(Gln). Also essential during biosynthesis of the molybdenum cofactor. Acts by mediating the C-terminal thiocarboxylation of sulfur carriers urm1 and mocs2a. Its N-terminus first activates urm1 and mocs2a as acyl-adenylates (-COAMP), then the persulfide sulfur on the catalytic cysteine is transferred to urm1 and mocs2a to form thiocarboxylation (-COSH) of their C-terminus. The reaction probably involves hydrogen sulfide that is generated from the persulfide intermediate and that acts as a nucleophile towards urm1 and mocs2a. Subsequently, a transient disulfide bond is formed. Does not use thiosulfate as sulfur donor; nfs1 probably acting as a sulfur donor for thiocarboxylation reactions. In Aspergillus clavatus (strain ATCC 1007 / CBS 513.65 / DSM 816 / NCTC 3887 / NRRL 1 / QM 1276 / 107), this protein is Adenylyltransferase and sulfurtransferase uba4.